We begin with the raw amino-acid sequence, 407 residues long: 1-deoxy-D-xylulose 5-phosphate reductoisomerase (407 aa).

Residues Thr25, Gly26, Ser27, Ile28, Asn53, and Asn136 each contribute to the NADPH site. Lys137 lines the 1-deoxy-D-xylulose 5-phosphate pocket. Glu138 serves as a coordination point for NADPH. Residue Asp162 coordinates Mn(2+). Residues Ser163, Glu164, Ser188, and His211 each contribute to the 1-deoxy-D-xylulose 5-phosphate site. Glu164 is a Mn(2+) binding site. NADPH is bound at residue Gly217. 4 residues coordinate 1-deoxy-D-xylulose 5-phosphate: Ser224, Asn229, Lys230, and Glu233. Glu233 contributes to the Mn(2+) binding site.

This sequence belongs to the DXR family. Mg(2+) is required as a cofactor. It depends on Mn(2+) as a cofactor.

The enzyme catalyses 2-C-methyl-D-erythritol 4-phosphate + NADP(+) = 1-deoxy-D-xylulose 5-phosphate + NADPH + H(+). Its pathway is isoprenoid biosynthesis; isopentenyl diphosphate biosynthesis via DXP pathway; isopentenyl diphosphate from 1-deoxy-D-xylulose 5-phosphate: step 1/6. In terms of biological role, catalyzes the NADPH-dependent rearrangement and reduction of 1-deoxy-D-xylulose-5-phosphate (DXP) to 2-C-methyl-D-erythritol 4-phosphate (MEP). This Bradyrhizobium sp. (strain BTAi1 / ATCC BAA-1182) protein is 1-deoxy-D-xylulose 5-phosphate reductoisomerase.